Here is a 153-residue protein sequence, read N- to C-terminus: Ubiquitin/ISG15-conjugating enzyme E2 L6 (153 aa).

Positions 2-149 (TASKRVAKEL…AEEFTLQYGV (148 aa)) constitute a UBC core domain. Cys-86 serves as the catalytic Glycyl thioester intermediate.

This sequence belongs to the ubiquitin-conjugating enzyme family. As to quaternary structure, interacts with RNF19A, RNF19B and RNF144B. Interacts with FLT3 (tyrosine phosphorylated). Post-translationally, ISGylated.

It carries out the reaction S-ubiquitinyl-[E1 ubiquitin-activating enzyme]-L-cysteine + [E2 ubiquitin-conjugating enzyme]-L-cysteine = [E1 ubiquitin-activating enzyme]-L-cysteine + S-ubiquitinyl-[E2 ubiquitin-conjugating enzyme]-L-cysteine.. Its pathway is protein modification; protein ubiquitination. In terms of biological role, catalyzes the covalent attachment of ubiquitin to other proteins. Functions in the E6/E6-AP-induced ubiquitination of p53/TP53. Promotes ubiquitination and subsequent proteasomal degradation of FLT3. The protein is Ubiquitin/ISG15-conjugating enzyme E2 L6 (Ube2l6) of Rattus norvegicus (Rat).